The chain runs to 74 residues: Kappa-scoloptoxin(07)-Ssm2d (74 aa).

A signal peptide spans 1-19; the sequence is MLVFYALLFVTVFSNTVMG. A propeptide spanning residues 20-41 is cleaved from the precursor; the sequence is ATIDKPIPKPILREAIEEIEVN.

This sequence belongs to the scoloptoxin-07 family. In terms of processing, contains 3 disulfide bonds. As to expression, expressed by the venom gland.

It localises to the secreted. Its function is as follows. Inhibits voltage-gated potassium channels. This chain is Kappa-scoloptoxin(07)-Ssm2d, found in Scolopendra mutilans (Chinese red-headed centipede).